Consider the following 263-residue polypeptide: Proteasome subunit beta type-5 (263 aa).

Residues 1 to 59 constitute a propeptide, removed in mature form; that stretch reads MALASVLERPLPVNQRGFFGLGGRADLLDLGPGSLSDGLSLAAPGWGVPEEPGIEMLHG. Thr-60 (nucleophile) is an active-site residue. Ala-108 provides a ligand contact to bortezomib.

This sequence belongs to the peptidase T1B family. In terms of assembly, the 26S proteasome consists of a 20S proteasome core and two 19S regulatory subunits. The 20S proteasome core is a barrel-shaped complex made of 28 subunits that are arranged in four stacked rings. The two outer rings are each formed by seven alpha subunits, and the two inner rings are formed by seven beta subunits. The proteolytic activity is exerted by three beta-subunits PSMB5, PSMB6 and PSMB7. Directly interacts with POMP. Interacts with ABCB1 and TAP1. (Microbial infection) Interacts with HIV-1 TAT protein.

Its subcellular location is the cytoplasm. The protein localises to the nucleus. The catalysed reaction is Cleavage of peptide bonds with very broad specificity.. In terms of biological role, component of the 20S core proteasome complex involved in the proteolytic degradation of most intracellular proteins. This complex plays numerous essential roles within the cell by associating with different regulatory particles. Associated with two 19S regulatory particles, forms the 26S proteasome and thus participates in the ATP-dependent degradation of ubiquitinated proteins. The 26S proteasome plays a key role in the maintenance of protein homeostasis by removing misfolded or damaged proteins that could impair cellular functions, and by removing proteins whose functions are no longer required. Associated with the PA200 or PA28, the 20S proteasome mediates ubiquitin-independent protein degradation. This type of proteolysis is required in several pathways including spermatogenesis (20S-PA200 complex) or generation of a subset of MHC class I-presented antigenic peptides (20S-PA28 complex). Within the 20S core complex, PSMB5 displays a chymotrypsin-like activity. The protein is Proteasome subunit beta type-5 of Homo sapiens (Human).